A 302-amino-acid chain; its full sequence is S-crystallin SL4 (302 aa).

3 consecutive repeat copies span residues 45–54 (GGYAVQSRGD), 55–64 (GGYYVKSRGD), and 65–74 (GGYPVQGRGD). Residues 45 to 84 (GGYAVQSRGDGGYYVKSRGDGGYPVQGRGDTGYSSQTRSD) form a 4 X approximate tandem repeats of G-G-Y-[AYP]-V-[QK]-[SG]-R-G-D region. 3 short sequence motifs (cell attachment site) span residues 52 to 54 (RGD), 62 to 64 (RGD), and 72 to 74 (RGD). A disordered region spans residues 68-92 (PVQGRGDTGYSSQTRSDDACLGQGR). The 4; approximate repeat unit spans residues 75–84 (TGYSSQTRSD). The Cell attachment site signature appears at 113–115 (RGD). Positions 118–205 (SDINSGLYSG…ESASRRSRNH (88 aa)) are disordered. Composition is skewed to basic and acidic residues over residues 129 to 166 (RMDD…HYRS) and 177 to 192 (AEDR…RIDI). The 120-residue stretch at 183 to 302 (GHSDSHRIDI…YIKRRYQSDF (120 aa)) folds into the GST C-terminal domain.

Belongs to the GST superfamily.

In terms of biological role, S-crystallins are structural components of squids and octopi eye lens. This Nototodarus sloanii (Wellington flying squid) protein is S-crystallin SL4.